The following is a 522-amino-acid chain: MNNQYILIIDFGSQYTKLVARRMKDIGAKFIISSWEIKKKELLKKNIKGILLSGSPMSVLDDKSPYVSKDILNMKVPILGICYGMHTLVKQLGGKVERKSVREFGYASIKILKNHSNLFYDNFEVSEKNYTKRQKVWMSHEDSVINIPKGFSIIASTKNCKYAAIFNKKNKFYGVQFHPEVTHSEKGYLILNRFVKNICNYTNVIKYSLSIRKIILKIKNKVNDEKVILGLSGGIDSFTSAILIHKAIGNNLFCICIDNGLLRNDEILKIKNLIKKVGKINVIYINHKKRFLKSLNGITDPEKKRKTIGNLFFKIFQEQADILKAKWLAQGTIYPDIIESSQNNLLKKDNFIKSHHNVCPLPKGIKLKILEPLKHLFKDEVKKIAKKIGIPKEIIFRHPFPGPGLAVRIIGEIKEEYCNILRMADEIFISELKSENLYFNISQAFSVLLPIKSVAVMGDMRKYEWVISLRAIETLDFMSANWANIPYKILNNVSNRIINEVRGISRVVYDISNKPPSTIEWE.

Residues 5–204 (YILIIDFGSQ…VKNICNYTNV (200 aa)) enclose the Glutamine amidotransferase type-1 domain. The active-site Nucleophile is Cys82. Catalysis depends on residues His178 and Glu180. The GMPS ATP-PPase domain maps to 205–397 (IKYSLSIRKI…IGIPKEIIFR (193 aa)). 232 to 238 (SGGIDSF) provides a ligand contact to ATP.

In terms of assembly, homodimer.

The enzyme catalyses XMP + L-glutamine + ATP + H2O = GMP + L-glutamate + AMP + diphosphate + 2 H(+). It functions in the pathway purine metabolism; GMP biosynthesis; GMP from XMP (L-Gln route): step 1/1. Functionally, catalyzes the synthesis of GMP from XMP. The chain is GMP synthase [glutamine-hydrolyzing] from Wigglesworthia glossinidia brevipalpis.